The chain runs to 690 residues: Glycine--tRNA ligase beta subunit (690 aa).

Belongs to the class-II aminoacyl-tRNA synthetase family. As to quaternary structure, tetramer of two alpha and two beta subunits.

It is found in the cytoplasm. It carries out the reaction tRNA(Gly) + glycine + ATP = glycyl-tRNA(Gly) + AMP + diphosphate. This chain is Glycine--tRNA ligase beta subunit, found in Desulfatibacillum aliphaticivorans.